A 145-amino-acid chain; its full sequence is D-aminoacyl-tRNA deacylase (145 aa).

Positions 137 to 138 match the Gly-cisPro motif, important for rejection of L-amino acids motif; that stretch reads GP.

Belongs to the DTD family. Homodimer.

Its subcellular location is the cytoplasm. It catalyses the reaction glycyl-tRNA(Ala) + H2O = tRNA(Ala) + glycine + H(+). The catalysed reaction is a D-aminoacyl-tRNA + H2O = a tRNA + a D-alpha-amino acid + H(+). In terms of biological role, an aminoacyl-tRNA editing enzyme that deacylates mischarged D-aminoacyl-tRNAs. Also deacylates mischarged glycyl-tRNA(Ala), protecting cells against glycine mischarging by AlaRS. Acts via tRNA-based rather than protein-based catalysis; rejects L-amino acids rather than detecting D-amino acids in the active site. By recycling D-aminoacyl-tRNA to D-amino acids and free tRNA molecules, this enzyme counteracts the toxicity associated with the formation of D-aminoacyl-tRNA entities in vivo and helps enforce protein L-homochirality. The protein is D-aminoacyl-tRNA deacylase of Escherichia coli O81 (strain ED1a).